The sequence spans 677 residues: Zinc finger and BTB domain-containing protein 5 (677 aa).

Positions 24–93 constitute a BTB domain; that stretch reads CDCVIVVGNR…MYTSTLMLGE (70 aa). Positions 158 to 181 are enriched in polar residues; sequence LNSSQNGEEQPAPMSSSMRSNLDQ. 2 disordered regions span residues 158 to 252 and 287 to 312; these read LNSS…MTDN and SMASRATQVETSFDQEAAPEKSSFQC. Phosphoserine is present on Ser-234. Lys-239 participates in a covalent cross-link: Glycyl lysine isopeptide (Lys-Gly) (interchain with G-Cter in SUMO2). The span at 287 to 300 shows a compositional bias: polar residues; that stretch reads SMASRATQVETSFD. Glycyl lysine isopeptide (Lys-Gly) (interchain with G-Cter in SUMO2) cross-links involve residues Lys-322 and Lys-330. Positions 331–387 are disordered; it reads SEPLSSPEPQDEVSDVTSQAEGSESVEVEGVVVSAEKIDLSPESSDRSFSDPQSSTD. The segment covering 350 to 365 has biased composition (low complexity); that stretch reads AEGSESVEVEGVVVSA. Residues 366–379 are compositionally biased toward basic and acidic residues; the sequence is EKIDLSPESSDRSF. Ser-371 carries the phosphoserine modification. Glycyl lysine isopeptide (Lys-Gly) (interchain with G-Cter in SUMO2) cross-links involve residues Lys-404 and Lys-415. A disordered region spans residues 447–474; it reads LLSPEAGPAGGPSSAPGSHVENPFSEPA. Positions 449–464 are enriched in low complexity; the sequence is SPEAGPAGGPSSAPGS. Lys-541 is covalently cross-linked (Glycyl lysine isopeptide (Lys-Gly) (interchain with G-Cter in SUMO2)). Residues 552–576 are compositionally biased toward polar residues; the sequence is QIPENSTSSQLMMNGATSSFENGHP. Residues 552 to 585 form a disordered region; that stretch reads QIPENSTSSQLMMNGATSSFENGHPSQPGPPQLT. Glycyl lysine isopeptide (Lys-Gly) (interchain with G-Cter in SUMO2) cross-links involve residues Lys-594 and Lys-597. Residues 613–635 form a C2H2-type 1 zinc finger; that stretch reads YACKICCKTFLTLTDCKKHIRVH. The segment at 641–664 adopts a C2H2-type 2; atypical zinc-finger fold; that stretch reads YACLKCGKRFSQSSHLYKHSKTTC. Residues Lys-645 and Lys-658 each participate in a glycyl lysine isopeptide (Lys-Gly) (interchain with G-Cter in SUMO2) cross-link.

Its subcellular location is the nucleus. May be involved in transcriptional regulation. This chain is Zinc finger and BTB domain-containing protein 5 (ZBTB5), found in Homo sapiens (Human).